The following is a 216-amino-acid chain: Adenylate kinase (216 aa).

Residue 10–15 (GAGKGT) coordinates ATP. The segment at 30–59 (STGDIFRKNIKEGTELGKKAKEYMDQGLLV) is NMP. AMP contacts are provided by residues T31, R36, 57–59 (LLV), 85–88 (GFPR), and Q92. An LID region spans residues 126–163 (GRRICKSCGATYHVEFNPPKVEGVCDVCQGELYQRADD). Position 127 (R127) interacts with ATP. Zn(2+) is bound by residues C130 and C133. 136 to 137 (TY) contributes to the ATP binding site. Zn(2+)-binding residues include C150 and C153. Positions 160 and 171 each coordinate AMP. Q199 contacts ATP.

This sequence belongs to the adenylate kinase family. Monomer.

It is found in the cytoplasm. The enzyme catalyses AMP + ATP = 2 ADP. The protein operates within purine metabolism; AMP biosynthesis via salvage pathway; AMP from ADP: step 1/1. Functionally, catalyzes the reversible transfer of the terminal phosphate group between ATP and AMP. Plays an important role in cellular energy homeostasis and in adenine nucleotide metabolism. The polypeptide is Adenylate kinase (Clostridioides difficile (strain 630) (Peptoclostridium difficile)).